The following is a 435-amino-acid chain: Probable tRNA pseudouridine synthase D (435 aa).

D95 acts as the Nucleophile in catalysis. Residues 170-396 (GVPNYFGTQR…SSGTRRAVLV (227 aa)) form the TRUD domain.

This sequence belongs to the pseudouridine synthase TruD family.

The catalysed reaction is uridine(13) in tRNA = pseudouridine(13) in tRNA. In terms of biological role, could be responsible for synthesis of pseudouridine from uracil-13 in transfer RNAs. This Natronomonas pharaonis (strain ATCC 35678 / DSM 2160 / CIP 103997 / JCM 8858 / NBRC 14720 / NCIMB 2260 / Gabara) (Halobacterium pharaonis) protein is Probable tRNA pseudouridine synthase D.